A 547-amino-acid chain; its full sequence is TBCC domain-containing protein 1 (547 aa).

Residues 304–435 (PHTHRMVVMS…LEDHMAHTGL (132 aa)) form the C-CAP/cofactor C-like domain.

Belongs to the TBCC family.

The protein localises to the cytoplasm. It localises to the cytoskeleton. Its subcellular location is the microtubule organizing center. It is found in the centrosome. The protein resides in the spindle pole. Functionally, may play a role in the regulation of centrosome and Golgi apparatus positioning. The protein is TBCC domain-containing protein 1 (tbccd1) of Xenopus tropicalis (Western clawed frog).